The sequence spans 92 residues: Small ribosomal subunit protein uS19c (92 aa).

This sequence belongs to the universal ribosomal protein uS19 family.

It is found in the plastid. The protein localises to the chloroplast. Its function is as follows. Protein S19 forms a complex with S13 that binds strongly to the 16S ribosomal RNA. This Phalaenopsis aphrodite subsp. formosana (Moth orchid) protein is Small ribosomal subunit protein uS19c.